Consider the following 560-residue polypeptide: MFS-type transporter pgmG (560 aa).

Residues 1 to 32 (MSETVTQTETDQRPATARSLGAEEKEAKSDEQ) form a disordered region. Positions 21–31 (GAEEKEAKSDE) are enriched in basic and acidic residues. Helical transmembrane passes span 45–65 (FIVIISILSSVTLYSLDNTIV), 84–104 (WLSVAFLVACVATNSIWSKIY), 111–131 (WLYLFCVVLFEVGSAMCGAAP), 141–161 (ALAGLGGAGLYVGVMTLLSVN), 174–194 (TGLTWGVGTVLGPIVGGGFAV), 201–221 (WSFYINLFFAAVAIPIYLFML), 242–262 (LGTILMIGACVSGVMAINFGG), and 275–295 (CFVVSGVLFIVFGLQQWYCIG). N300 is a glycosylation site (N-linked (GlcNAc...) asparagine). A helical membrane pass occupies residues 313–333 (FIILFVQTASVATVFFVPIYF). N-linked (GlcNAc...) asparagine glycosylation occurs at N343. A run of 5 helical transmembrane segments spans residues 346 to 366 (AIDAGVRLLPLVCFIVAAMIL), 378 to 398 (MPWYLVGGCLSLVGSVLMYTI), 409 to 429 (GYMIILGVGGGMYAQASFAVA), 440 to 460 (VATGFISLAQLTGGTIALAIA), and 515 to 535 (ISQVYILPITGAAMSISLAIF).

The protein belongs to the major facilitator superfamily. TCR/Tet family.

The protein resides in the membrane. MFS-type transporter; part of the gene cluster that mediates the biosynthesis of pleosporalin A, ascomycone A, as well as a third cryptic naphthoquinone derived pigment, all responsible for the coloration of conidia. Seems not to be involved in pigment biosynthesis although its expression is regulated by the cluster-specific transcription factor pgmR. The sequence is that of MFS-type transporter pgmG from Aspergillus terreus.